A 605-amino-acid chain; its full sequence is uncharacterized protein (605 aa).

A disordered region spans residues 22–93 (FTEPARFYPS…KQGTAVHGAE (72 aa)). Low complexity predominate over residues 46-57 (SENASSSVPSHS).

This is an uncharacterized protein from Treponema pallidum (strain Nichols).